We begin with the raw amino-acid sequence, 357 residues long: Alanine racemase (357 aa).

Lys-35 functions as the Proton acceptor; specific for D-alanine in the catalytic mechanism. At Lys-35 the chain carries N6-(pyridoxal phosphate)lysine. Position 131 (Arg-131) interacts with substrate. Tyr-256 serves as the catalytic Proton acceptor; specific for L-alanine. Met-304 contributes to the substrate binding site.

This sequence belongs to the alanine racemase family. Pyridoxal 5'-phosphate serves as cofactor.

It catalyses the reaction L-alanine = D-alanine. The protein operates within amino-acid biosynthesis; D-alanine biosynthesis; D-alanine from L-alanine: step 1/1. Its function is as follows. Catalyzes the interconversion of L-alanine and D-alanine. May also act on other amino acids. The chain is Alanine racemase (alr) from Legionella pneumophila (strain Corby).